Here is a 229-residue protein sequence, read N- to C-terminus: Large ribosomal subunit protein uL1 (229 aa).

Belongs to the universal ribosomal protein uL1 family. Part of the 50S ribosomal subunit.

Binds directly to 23S rRNA. The L1 stalk is quite mobile in the ribosome, and is involved in E site tRNA release. Functionally, protein L1 is also a translational repressor protein, it controls the translation of the L11 operon by binding to its mRNA. The polypeptide is Large ribosomal subunit protein uL1 (Streptococcus equi subsp. zooepidemicus (strain MGCS10565)).